A 202-amino-acid chain; its full sequence is Protein DEHYDRATION-INDUCED 19 homolog 5 (202 aa).

The span at 88-97 shows a compositional bias: basic residues; that stretch reads SHLLKRRKPS. The interval 88 to 120 is disordered; it reads SHLLKRRKPSRPSSSWPTPSNNSDPYFEGPPQY. The span at 98 to 112 shows a compositional bias: low complexity; that stretch reads RPSSSWPTPSNNSDP.

The protein belongs to the Di19 family.

This is Protein DEHYDRATION-INDUCED 19 homolog 5 (DI19-5) from Oryza sativa subsp. japonica (Rice).